Consider the following 387-residue polypeptide: tRNA N6-adenosine threonylcarbamoyltransferase (387 aa).

Positions 112 and 116 each coordinate Fe cation. Residues 134–138 (LASGG), Asp167, Gly180, and Asn325 contribute to the substrate site. Fe cation is bound at residue Asp353.

This sequence belongs to the KAE1 / TsaD family. It depends on Fe(2+) as a cofactor.

It localises to the cytoplasm. The catalysed reaction is L-threonylcarbamoyladenylate + adenosine(37) in tRNA = N(6)-L-threonylcarbamoyladenosine(37) in tRNA + AMP + H(+). Functionally, required for the formation of a threonylcarbamoyl group on adenosine at position 37 (t(6)A37) in tRNAs that read codons beginning with adenine. Is involved in the transfer of the threonylcarbamoyl moiety of threonylcarbamoyl-AMP (TC-AMP) to the N6 group of A37, together with TsaE and TsaB. TsaD likely plays a direct catalytic role in this reaction. The protein is tRNA N6-adenosine threonylcarbamoyltransferase of Rickettsia prowazekii (strain Madrid E).